Consider the following 101-residue polypeptide: Gamma-secretase subunit PEN-2 (101 aa).

Over 1–17 (MNLERVSNEEKLNLCRK) the chain is Cytoplasmic. Positions 18-36 (YYLGGFAFLPFLWLVNIFW) form an intramembrane region, helical. The Cytoplasmic portion of the chain corresponds to 37–57 (FFREAFLAPAYTEQSQIKGYV). Residues 58–78 (WRSAVGFLFWVIILATWITIF) traverse the membrane as a helical segment. At 79 to 101 (QIYRPRWGALGDYLSFTIPLGTP) the chain is on the lumenal side.

This sequence belongs to the PEN-2 family. The functional gamma-secretase complex is composed of at least four polypeptides: a presenilin homodimer (PSEN1 or PSEN2), nicastrin (NCSTN), APH1 (APH1A or APH1B) and PSENEN.

Its subcellular location is the endoplasmic reticulum membrane. It is found in the golgi apparatus. The protein localises to the golgi stack membrane. It localises to the cell membrane. The protein resides in the membrane. Its function is as follows. Essential subunit of the gamma-secretase complex, an endoprotease complex that catalyzes the intramembrane cleavage of integral membrane proteins such as Notch receptors and APP (amyloid-beta precursor protein). The gamma-secretase complex plays a role in Notch and Wnt signaling cascades and regulation of downstream processes via its role in processing key regulatory proteins, and by regulating cytosolic CTNNB1 levels. PSENEN modulates both endoproteolysis of presenilin and gamma-secretase activity. The polypeptide is Gamma-secretase subunit PEN-2 (Psenen) (Mus musculus (Mouse)).